The following is a 155-amino-acid chain: SsrA-binding protein (155 aa).

Belongs to the SmpB family.

It is found in the cytoplasm. Required for rescue of stalled ribosomes mediated by trans-translation. Binds to transfer-messenger RNA (tmRNA), required for stable association of tmRNA with ribosomes. tmRNA and SmpB together mimic tRNA shape, replacing the anticodon stem-loop with SmpB. tmRNA is encoded by the ssrA gene; the 2 termini fold to resemble tRNA(Ala) and it encodes a 'tag peptide', a short internal open reading frame. During trans-translation Ala-aminoacylated tmRNA acts like a tRNA, entering the A-site of stalled ribosomes, displacing the stalled mRNA. The ribosome then switches to translate the ORF on the tmRNA; the nascent peptide is terminated with the 'tag peptide' encoded by the tmRNA and targeted for degradation. The ribosome is freed to recommence translation, which seems to be the essential function of trans-translation. The polypeptide is SsrA-binding protein (Lactococcus lactis subsp. cremoris (strain MG1363)).